The chain runs to 342 residues: Methylthioribose-1-phosphate isomerase (342 aa).

Residues 49–51, arginine 86, and glutamine 187 contribute to the substrate site; that span reads RGA. Aspartate 228 acts as the Proton donor in catalysis. 238–239 contributes to the substrate binding site; the sequence is NK.

This sequence belongs to the eIF-2B alpha/beta/delta subunits family. MtnA subfamily.

The enzyme catalyses 5-(methylsulfanyl)-alpha-D-ribose 1-phosphate = 5-(methylsulfanyl)-D-ribulose 1-phosphate. The protein operates within amino-acid biosynthesis; L-methionine biosynthesis via salvage pathway; L-methionine from S-methyl-5-thio-alpha-D-ribose 1-phosphate: step 1/6. Catalyzes the interconversion of methylthioribose-1-phosphate (MTR-1-P) into methylthioribulose-1-phosphate (MTRu-1-P). The polypeptide is Methylthioribose-1-phosphate isomerase (Citrobacter koseri (strain ATCC BAA-895 / CDC 4225-83 / SGSC4696)).